Here is a 280-residue protein sequence, read N- to C-terminus: Ycf3-interacting protein 1, chloroplastic (280 aa).

Residues 1-62 (MTTQIFQLPL…NNRRFGSLIV (62 aa)) constitute a chloroplast transit peptide. The interval 75 to 103 (PVPLTLEQQEKEKQNRDDEEDEIDEGDVD) is disordered. Residues 91–103 (DDEEDEIDEGDVD) show a composition bias toward acidic residues. The chain crosses the membrane as a helical span at residues 255-275 (ALYFVSALPVIIGISVVLILF).

It belongs to the Y3IP1/CEST family. In terms of assembly, interacts with Ycf3. In terms of tissue distribution, expressed in cotyledons, rosette and cauline leaves, stems and sepals.

The protein resides in the plastid. It localises to the chloroplast thylakoid membrane. In terms of biological role, nuclear genome-encoded factor that participates in photosystem I (PSI) biogenesis. Cooperates with the plastid genome-encoded protein PSI assembly Ycf3 in the assembly of stable PSI units in the thylakoid membrane. Involved in light-induced chloroplast development and growth. Involved in the plant response to abiotic and photooxidative stresses. May be involved in the suppression of photooxidative damage. The chain is Ycf3-interacting protein 1, chloroplastic from Arabidopsis thaliana (Mouse-ear cress).